Here is a 358-residue protein sequence, read N- to C-terminus: 3'(2'),5'-bisphosphate nucleotidase 2 (358 aa).

Asp-54 serves as the catalytic Proton acceptor. 4 residues coordinate Mg(2+): Glu-77, Asp-141, Ile-143, and Asp-144. The active-site Proton acceptor is the Thr-146. Adenosine 3',5'-bisphosphate is bound by residues Thr-146, His-243, Ser-272, Lys-275, Arg-289, and Asp-302. AMP is bound by residues His-243, Ser-272, Lys-275, Arg-289, and Asp-302. Asp-302 provides a ligand contact to Mg(2+).

The protein belongs to the inositol monophosphatase superfamily. The cofactor is Mg(2+).

It catalyses the reaction 3'-phosphoadenylyl sulfate + H2O = adenosine 5'-phosphosulfate + phosphate. The enzyme catalyses adenosine 3',5'-bisphosphate + H2O = AMP + phosphate. The catalysed reaction is adenosine 2',5'-bisphosphate + H2O = AMP + phosphate. Functionally, phosphatase that converts adenosine 3'-phosphate 5'-phosphosulfate (PAPS) to adenosine 5'-phosphosulfate (APS) and 3'(2')-phosphoadenosine 5'-phosphate (PAP) to AMP. Regulates the flux of sulfur in the sulfur-activation pathway by converting PAPS to APS. Involved in salt tolerance. The polypeptide is 3'(2'),5'-bisphosphate nucleotidase 2 (HAL22) (Candida albicans (strain SC5314 / ATCC MYA-2876) (Yeast)).